Consider the following 350-residue polypeptide: Guanine nucleotide-binding protein G(t) subunit alpha-1 (350 aa).

The interval 1–21 is disordered; it reads MGAGASAEEKHSRELEKKLKE. G2 is lipidated: N-myristoyl glycine. Residues 7–21 are compositionally biased toward basic and acidic residues; that stretch reads AEEKHSRELEKKLKE. The 323-residue stretch at 28-350 folds into the G-alpha domain; it reads RTVKLLLLGA…KENLKDCGLF (323 aa). The G1 motif stretch occupies residues 31 to 44; the sequence is KLLLLGAGESGKST. 36–43 serves as a coordination point for GTP; it reads GAGESGKS. Residue S43 participates in Mg(2+) binding. Y142 carries the phosphotyrosine modification. Residues D146, 171–177, G199, 265–268, and A322 contribute to the GTP site; these read LRSRVKT and NKKD. The segment at 169–177 is G2 motif; the sequence is DVLRSRVKT. Mg(2+) is bound at residue T177. The tract at residues 192–201 is G3 motif; it reads FRMFDVGGQR. A G4 motif region spans residues 261 to 268; the sequence is VLFLNKKD. The interval 320 to 325 is G5 motif; the sequence is TCATDT. Residues 340–350 form an interaction with RHO region; sequence IKENLKDCGLF.

The protein belongs to the G-alpha family. G(i/o/t/z) subfamily. Heterotrimeric G proteins are composed of 3 subunits alpha, beta and gamma. The alpha chain contains the guanine nucleotide binding site. Interacts with RHO. Interacts with RGS9 and PDE6G. Interacts (when myristoylated) with UNC119; interaction is required for localization in sensory neurons. In the retina, expressed in the rod photoreceptors.

The protein localises to the cell projection. Its subcellular location is the cilium. It localises to the photoreceptor outer segment. It is found in the membrane. The protein resides in the photoreceptor inner segment. Its function is as follows. Functions as a signal transducer for the rod photoreceptor RHO. Required for normal RHO-mediated light perception by the retina. Guanine nucleotide-binding proteins (G proteins) function as transducers downstream of G protein-coupled receptors (GPCRs), such as the photoreceptor RHO. The alpha chain contains the guanine nucleotide binding site and alternates between an active, GTP-bound state and an inactive, GDP-bound state. Activated RHO promotes GDP release and GTP binding. Signaling is mediated via downstream effector proteins, such as cGMP-phosphodiesterase. The protein is Guanine nucleotide-binding protein G(t) subunit alpha-1 (Gnat1) of Mus musculus (Mouse).